Reading from the N-terminus, the 154-residue chain is Ribonuclease H (154 aa).

Residues 7 to 148 (KPETVEIYTD…ADALAREGIA (142 aa)) form the RNase H type-1 domain. Asp-16, Glu-54, Asp-76, and Asp-140 together coordinate Mg(2+).

It belongs to the RNase H family. In terms of assembly, monomer. The cofactor is Mg(2+).

Its subcellular location is the cytoplasm. It catalyses the reaction Endonucleolytic cleavage to 5'-phosphomonoester.. Functionally, endonuclease that specifically degrades the RNA of RNA-DNA hybrids. This chain is Ribonuclease H, found in Paramagnetospirillum magneticum (strain ATCC 700264 / AMB-1) (Magnetospirillum magneticum).